We begin with the raw amino-acid sequence, 170 residues long: Arginine repressor (170 aa).

The protein belongs to the ArgR family.

It is found in the cytoplasm. Its pathway is amino-acid biosynthesis; L-arginine biosynthesis [regulation]. Functionally, regulates arginine biosynthesis genes. The sequence is that of Arginine repressor from Bifidobacterium longum (strain DJO10A).